Consider the following 1407-residue polypeptide: JmjC domain-containing histone demethylation protein 1 (1407 aa).

Disordered regions lie at residues 1–86 (MISA…SSTI) and 98–151 (PTFT…NAFS). Basic and acidic residues-rich tracts occupy residues 55 to 67 (DHVR…KRPS) and 125 to 140 (PVER…RDES). Positions 141 to 150 (SYTQHRSNAF) are enriched in polar residues. The PHD-type zinc finger occupies 323–382 (QASCATCNLVRIPVDNEDQDVTWISCDGCKRWFHIVCAGFKNDRETRTVDKFICKTCRPI). The region spanning 577-735 (VSQSKLGRLI…MQIKIAKIEK (159 aa)) is the JmjC domain. Threonine 628 contributes to the substrate binding site. Residues histidine 631 and aspartate 633 each coordinate Fe cation. Lysine 648 contacts substrate. Histidine 703 lines the Fe cation pocket. 4 disordered regions span residues 893–987 (KLSL…LGPK), 1004–1027 (KEEN…HHTP), 1122–1183 (IKAQ…QDSV), and 1252–1389 (DEMD…SLRL). Basic and acidic residues-rich tracts occupy residues 896-914 (LAEK…RNAD) and 928-938 (LSERPAVDIQK). Polar residues predominate over residues 1008–1027 (NGASGSQMTVSTSSLGHHTP). Residues 1254–1264 (MDIHDQVDAGG) show a composition bias toward basic and acidic residues. Over residues 1273-1284 (PSSGSRQSSRQP) the composition is skewed to low complexity. Residues 1285–1296 (RQVERYMPEVHF) show a composition bias toward basic and acidic residues. Residues 1297 to 1349 (AKTAKSTTTTPQTTRRSSFGSSGRKTTPGLSSGSKKSGSRPSSSHGKKSLSPS) are compositionally biased toward low complexity.

This sequence belongs to the JHDM1 histone demethylase family. Fe(2+) serves as cofactor.

It is found in the nucleus. The catalysed reaction is N(6),N(6)-dimethyl-L-lysyl(36)-[histone H3] + 2 2-oxoglutarate + 2 O2 = L-lysyl(36)-[histone H3] + 2 formaldehyde + 2 succinate + 2 CO2. Histone demethylase that specifically demethylates 'Lys-36' of histone H3, thereby playing a central role in histone code. In Emericella nidulans (strain FGSC A4 / ATCC 38163 / CBS 112.46 / NRRL 194 / M139) (Aspergillus nidulans), this protein is JmjC domain-containing histone demethylation protein 1 (jhd1).